Here is a 306-residue protein sequence, read N- to C-terminus: L-lactate dehydrogenase (306 aa).

Residues valine 11, aspartate 32, lysine 37, and 76-77 (GA) each bind NAD(+). 2 residues coordinate substrate: glutamine 79 and arginine 85. NAD(+)-binding positions include serine 98, 115-117 (VSN), and serine 140. 117 to 120 (NPVD) provides a ligand contact to substrate. Substrate is bound at residue 145–148 (DTAR). The beta-D-fructose 1,6-bisphosphate site is built by arginine 150 and histidine 165. Histidine 172 functions as the Proton acceptor in the catalytic mechanism. Phosphotyrosine is present on tyrosine 214. Threonine 223 contributes to the substrate binding site.

This sequence belongs to the LDH/MDH superfamily. LDH family. Homotetramer.

The protein resides in the cytoplasm. The catalysed reaction is (S)-lactate + NAD(+) = pyruvate + NADH + H(+). It participates in fermentation; pyruvate fermentation to lactate; (S)-lactate from pyruvate: step 1/1. Allosterically activated by fructose 1,6-bisphosphate (FBP). In terms of biological role, catalyzes the conversion of lactate to pyruvate. The chain is L-lactate dehydrogenase from Synechococcus sp. (strain JA-3-3Ab) (Cyanobacteria bacterium Yellowstone A-Prime).